Consider the following 128-residue polypeptide: Cystatin-1 (128 aa).

Positions 1–17 (MIRSAVVLTVLVGVCLA) are cleaved as a signal peptide. Positions 20-128 (GFVGGWSQVD…TKEVTSFECN (109 aa)) constitute a Cystatin domain. 2 cysteine pairs are disulfide-bonded: Cys84–Cys96 and Cys107–Cys127.

Belongs to the cystatin family. Mainly expressed in gut.

It localises to the secreted. Inhibitor of cysteine proteinases. Strongly inhibits mammalian cathepsin B and H, and moderately inhibits mammalian cathepsin C. Also inhibits endogenous cathepsin B-like but not cathepsin C-like proteinases. May have a protective role against undesired digestion of a stored blood meal by endogenous peptidases. The polypeptide is Cystatin-1 (Ornithodoros moubata (Soft tick)).